Reading from the N-terminus, the 52-residue chain is MPQMAPLLWLNLFLMFSATFVMFIVLNYFIKVPSKIEKSSSQLQKMEMTWKW.

A helical transmembrane segment spans residues 6 to 26 (PLLWLNLFLMFSATFVMFIVL).

It belongs to the ATPase protein 8 family. As to quaternary structure, F-type ATPases have 2 components, CF(1) - the catalytic core - and CF(0) - the membrane proton channel.

It is found in the mitochondrion membrane. In terms of biological role, mitochondrial membrane ATP synthase (F(1)F(0) ATP synthase or Complex V) produces ATP from ADP in the presence of a proton gradient across the membrane which is generated by electron transport complexes of the respiratory chain. F-type ATPases consist of two structural domains, F(1) - containing the extramembraneous catalytic core and F(0) - containing the membrane proton channel, linked together by a central stalk and a peripheral stalk. During catalysis, ATP synthesis in the catalytic domain of F(1) is coupled via a rotary mechanism of the central stalk subunits to proton translocation. Part of the complex F(0) domain. Minor subunit located with subunit a in the membrane. This is ATP synthase protein 8 (MT-ATP8) from Penaeus monodon (Giant tiger prawn).